Consider the following 207-residue polypeptide: Large ribosomal subunit protein uL4 (207 aa).

The disordered stretch occupies residues 45–78; the sequence is RQGTHAVKNRSAVRGGGRKPWRQKGTGRARQGSI. The segment covering 60–71 has biased composition (basic residues); it reads GGRKPWRQKGTG.

It belongs to the universal ribosomal protein uL4 family. In terms of assembly, part of the 50S ribosomal subunit.

Functionally, one of the primary rRNA binding proteins, this protein initially binds near the 5'-end of the 23S rRNA. It is important during the early stages of 50S assembly. It makes multiple contacts with different domains of the 23S rRNA in the assembled 50S subunit and ribosome. Its function is as follows. Forms part of the polypeptide exit tunnel. This Pediococcus pentosaceus (strain ATCC 25745 / CCUG 21536 / LMG 10740 / 183-1w) protein is Large ribosomal subunit protein uL4.